The chain runs to 321 residues: Beta-ketoacyl-[acyl-carrier-protein] synthase III (321 aa).

Active-site residues include C114 and H248. Residues 249-253 are ACP-binding; sequence QANKR. Residue N278 is part of the active site.

Belongs to the thiolase-like superfamily. FabH family. As to quaternary structure, homodimer.

It is found in the cytoplasm. It carries out the reaction malonyl-[ACP] + acetyl-CoA + H(+) = 3-oxobutanoyl-[ACP] + CO2 + CoA. It participates in lipid metabolism; fatty acid biosynthesis. In terms of biological role, catalyzes the condensation reaction of fatty acid synthesis by the addition to an acyl acceptor of two carbons from malonyl-ACP. Catalyzes the first condensation reaction which initiates fatty acid synthesis and may therefore play a role in governing the total rate of fatty acid production. Possesses both acetoacetyl-ACP synthase and acetyl transacylase activities. Its substrate specificity determines the biosynthesis of branched-chain and/or straight-chain of fatty acids. In Sphingopyxis alaskensis (strain DSM 13593 / LMG 18877 / RB2256) (Sphingomonas alaskensis), this protein is Beta-ketoacyl-[acyl-carrier-protein] synthase III.